The chain runs to 166 residues: Disulfide bond reductase DsbH (166 aa).

The first 22 residues, 1–22 (MKFWLQGCAFVGCLLLTLPCCA), serve as a signal peptide directing secretion. One can recognise a Thioredoxin domain in the interval 32-166 (LQQTRPIAAA…SKVKSALKLR (135 aa)). Cys72 and Cys75 are joined by a disulfide. 73-74 (MW) is a binding site for substrate.

Monomer.

Its subcellular location is the periplasm. In terms of biological role, catalyzes the reduction of disulfide bonds. May function in reducing intermolecular disulfides between proteins and small molecules in the periplasm, or keeping a specific subset of periplasmic proteins reduced, or maintaining the periplasm of Chlamydia in a generally reducing state. Seems to be unable to oxidize thiols into disulfides and does not display disulfide bond isomerase activity. In Chlamydia pneumoniae (Chlamydophila pneumoniae), this protein is Disulfide bond reductase DsbH (dsbH).